The sequence spans 1148 residues: Maintenance of telomere capping protein 5 (1148 aa).

WD repeat units lie at residues 63-106 (HHIT…SNAI), 112-152 (GHSR…RPFY), 156-195 (SWRS…TPLC), 199-239 (GHVS…TESK), and 299-348 (GHSD…YGKV). Residues 432–543 (EEVSAIGHKF…RFVLGEKVSL (112 aa)) form the RWD domain. Serine 759 carries the phosphoserine modification. A disordered region spans residues 963-990 (THNTLNGSSKFTEPAQKQGSRAISSSPF). Positions 964–990 (HNTLNGSSKFTEPAQKQGSRAISSSPF) are enriched in polar residues.

Belongs to the WD repeat WDR59 family. As to quaternary structure, component of the SEA complex composed of at least IML1/SEA1, RTC1/SEA2, MTC5/SEA3, NPR2, NPR3, SEA4, SEC13 and SEH1.

The protein resides in the vacuole membrane. Functionally, component of the SEA complex which coats the vacuolar membrane and is involved in intracellular trafficking, autophagy, response to nitrogen starvation, and amino acid biogenesis. May be involved in telomere capping. The sequence is that of Maintenance of telomere capping protein 5 (MTC5) from Saccharomyces cerevisiae (strain ATCC 204508 / S288c) (Baker's yeast).